Here is a 634-residue protein sequence, read N- to C-terminus: Zinc finger and BTB domain-containing protein 22 (634 aa).

The BTB domain occupies 57–121 (CDVSIRVQGR…AYTGRLSMAA (65 aa)). Disordered regions lie at residues 167 to 247 (TVPG…APVV) and 308 to 461 (APTP…GTSV). A compositionally biased stretch (low complexity) spans 180–198 (TVAPATMGSARSHASSRAS). A compositionally biased stretch (polar residues) spans 199-209 (ENQSPSSSNYF). A Phosphoserine modification is found at S202. The span at 217-229 (FSSSSQEAFAASA) shows a compositional bias: low complexity. Positions 317–340 (PDLEEEEEEEDLVLTCEDDEDEEL) are enriched in acidic residues. Residues 452-461 (GAVTVGGTSV) are compositionally biased toward low complexity. Residues 486-507 (FLCHCGKAFSHKSMRDRHVNMH) form a C2H2-type 1; atypical zinc finger. C2H2-type zinc fingers lie at residues 513–535 (FDCP…MKTH) and 541–562 (YECG…HRGH). Positions 568 to 634 (RLGGVGAVPG…MGFGGGGGAN (67 aa)) are disordered. The span at 608 to 618 (PPSSRRVWSPP) shows a compositional bias: low complexity.

This sequence belongs to the krueppel C2H2-type zinc-finger protein family.

It localises to the nucleus. May be involved in transcriptional regulation. This is Zinc finger and BTB domain-containing protein 22 (ZBTB22) from Homo sapiens (Human).